A 551-amino-acid polypeptide reads, in one-letter code: mRNA cap guanine-N(7) methyltransferase (551 aa).

A compositionally biased stretch (polar residues) spans 1 to 10 (MENRSSSGTP). Residues 1–152 (MENRSSSGTP…DRETLRRRQE (152 aa)) are disordered. Basic and acidic residues-rich tracts occupy residues 48-76 (VTEE…EERH) and 141-152 (LVDRETLRRRQE). Positions 194–551 (SKIKGLRSFN…FYHAFCFYKV (358 aa)) constitute an mRNA cap 0 methyltransferase domain. 203–204 (NN) is a binding site for mRNA. Residues Lys207, Gly250, Asp274, Asp312, 355 to 357 (MFA), and Tyr360 each bind S-adenosyl-L-methionine. Residues 407 to 430 (KAREEQEKKEKSDEAPEDGEVEED) are disordered. Residues 408-420 (AREEQEKKEKSDE) are compositionally biased toward basic and acidic residues. A compositionally biased stretch (acidic residues) spans 421 to 430 (APEDGEVEED).

The protein belongs to the class I-like SAM-binding methyltransferase superfamily. mRNA cap 0 methyltransferase family.

Its subcellular location is the nucleus. It catalyses the reaction a 5'-end (5'-triphosphoguanosine)-ribonucleoside in mRNA + S-adenosyl-L-methionine = a 5'-end (N(7)-methyl 5'-triphosphoguanosine)-ribonucleoside in mRNA + S-adenosyl-L-homocysteine. In terms of biological role, responsible for methylating the 5'-cap structure of mRNAs. This chain is mRNA cap guanine-N(7) methyltransferase (abd1), found in Aspergillus clavatus (strain ATCC 1007 / CBS 513.65 / DSM 816 / NCTC 3887 / NRRL 1 / QM 1276 / 107).